Here is a 432-residue protein sequence, read N- to C-terminus: Glutamate-1-semialdehyde 2,1-aminomutase (432 aa).

An N6-(pyridoxal phosphate)lysine modification is found at K269.

Belongs to the class-III pyridoxal-phosphate-dependent aminotransferase family. HemL subfamily. Homodimer. Pyridoxal 5'-phosphate is required as a cofactor.

It is found in the cytoplasm. It catalyses the reaction (S)-4-amino-5-oxopentanoate = 5-aminolevulinate. Its pathway is porphyrin-containing compound metabolism; protoporphyrin-IX biosynthesis; 5-aminolevulinate from L-glutamyl-tRNA(Glu): step 2/2. It participates in porphyrin-containing compound metabolism; chlorophyll biosynthesis. The sequence is that of Glutamate-1-semialdehyde 2,1-aminomutase from Chloroherpeton thalassium (strain ATCC 35110 / GB-78).